We begin with the raw amino-acid sequence, 199 residues long: Imidazoleglycerol-phosphate dehydratase (199 aa).

Belongs to the imidazoleglycerol-phosphate dehydratase family.

It is found in the cytoplasm. It catalyses the reaction D-erythro-1-(imidazol-4-yl)glycerol 3-phosphate = 3-(imidazol-4-yl)-2-oxopropyl phosphate + H2O. It functions in the pathway amino-acid biosynthesis; L-histidine biosynthesis; L-histidine from 5-phospho-alpha-D-ribose 1-diphosphate: step 6/9. This is Imidazoleglycerol-phosphate dehydratase from Rhodospirillum rubrum (strain ATCC 11170 / ATH 1.1.1 / DSM 467 / LMG 4362 / NCIMB 8255 / S1).